The following is a 1169-amino-acid chain: Pesticidal crystal protein Cry1Gb (1169 aa).

The protein belongs to the delta endotoxin family.

Its function is as follows. Promotes colloidosmotic lysis by binding to the midgut epithelial cells of lepidopteran larvae. Toxic to Pieris rapae. This is Pesticidal crystal protein Cry1Gb (cry1Gb) from Bacillus thuringiensis subsp. wuhanensis.